The following is a 370-amino-acid chain: uncharacterized protein (370 aa).

The next 2 helical transmembrane spans lie at 11–31 and 104–124; these read LFIF…LVFP and IITS…PILI. The interval 145–197 is disordered; sequence HHNNNNNNNNNNNNNNNNNNNNNNNNNNNNNNNNNNNNQNNNNNDNNDNNDVL. Over residues 147 to 194 the composition is skewed to low complexity; the sequence is NNNNNNNNNNNNNNNNNNNNNNNNNNNNNNNNNNNNQNNNNNDNNDNN. The next 2 membrane-spanning stretches (helical) occupy residues 227–247 and 310–330; these read ITQL…TFVV and LSLC…FLII.

It localises to the membrane. This is an uncharacterized protein from Dictyostelium discoideum (Social amoeba).